A 126-amino-acid chain; its full sequence is Large ribosomal subunit protein bL19 (126 aa).

Belongs to the bacterial ribosomal protein bL19 family.

In terms of biological role, this protein is located at the 30S-50S ribosomal subunit interface and may play a role in the structure and function of the aminoacyl-tRNA binding site. In Thiobacillus denitrificans (strain ATCC 25259 / T1), this protein is Large ribosomal subunit protein bL19.